Consider the following 91-residue polypeptide: Small ribosomal subunit protein uS19 (91 aa).

Belongs to the universal ribosomal protein uS19 family.

In terms of biological role, protein S19 forms a complex with S13 that binds strongly to the 16S ribosomal RNA. This Methylobacillus flagellatus (strain ATCC 51484 / DSM 6875 / VKM B-1610 / KT) protein is Small ribosomal subunit protein uS19.